A 620-amino-acid chain; its full sequence is Chaperone protein HscA homolog (620 aa).

This sequence belongs to the heat shock protein 70 family.

Chaperone involved in the maturation of iron-sulfur cluster-containing proteins. Has a low intrinsic ATPase activity which is markedly stimulated by HscB. This Neisseria meningitidis serogroup B (strain ATCC BAA-335 / MC58) protein is Chaperone protein HscA homolog.